We begin with the raw amino-acid sequence, 741 residues long: Prestin (741 aa).

The Cytoplasmic segment spans residues 1 to 79 (MDHVEETEIL…WLPAYRFKEY (79 aa)). A helical membrane pass occupies residues 80–105 (VLGDIVSGISTGVLQLPQGLAFAMLA). Topologically, residues 106–109 (AVPP) are extracellular. The helical transmembrane segment at 110–125 (VFGLYSSFYPVIMYCF) threads the bilayer. Topologically, residues 126–137 (FGTSRHISIGPF) are cytoplasmic. A helical transmembrane segment spans residues 138–147 (AVISLMIGGV). The Extracellular segment spans residues 148–178 (AVRLVPDDIVIPGGVNATNSTEARDALRVKV). Residues 158 to 168 (IPGGVNATNST) carry the Involved in motor function motif. Residues Asn163 and Asn166 are each glycosylated (N-linked (GlcNAc...) asparagine). The next 2 helical transmembrane spans lie at 179-208 (AMSVTLLTGIIQFCLGVCRFGFVAIYLTEP) and 209-230 (LVRGFTTAAAVHVFTSMLKYLF). The Extracellular segment spans residues 231–243 (GVKTKRYSGIFSV). Residues 244–248 (VYSTV) constitute an intramembrane region (helical). The Extracellular segment spans residues 249–261 (AVLQNVKNLNVCS). The chain crosses the membrane as a helical span at residues 262-283 (LGVGLMVFGLLLGGKEFNERFK). Residues 284-291 (EKLPAPIP) are Cytoplasmic-facing. The helical transmembrane segment at 292 to 303 (LEFFAVVMGTGI) threads the bilayer. Residues 304-338 (SAGFSLHESYNVDVVGTLPLGLLPPANPDTSLFHL) are Extracellular-facing. The helical transmembrane segment at 339–361 (VYVDAIAIAIVGFSVTISMAKTL) threads the bilayer. The Cytoplasmic segment spans residues 362–370 (ANKHGYQVD). The chain crosses the membrane as a helical span at residues 371–388 (GNQELIALGLCNSTGSLF). The Extracellular portion of the chain corresponds to 389 to 396 (QTFAISCS). The chain crosses the membrane as a helical span at residues 397-406 (LSRSLVQEGT). Salicylate is bound at residue Ser398. Residues 407–410 (GGKT) lie on the Cytoplasmic side of the membrane. The chain crosses the membrane as a helical span at residues 411–429 (QLAGCLASLMILLVILATG). The Extracellular segment spans residues 430-436 (FLFESLP). Residues 437–459 (QAVLSAIVIVNLKGMFMQFSDLP) traverse the membrane as a helical segment. The Cytoplasmic segment spans residues 460–467 (FFWRTSKI). A helical transmembrane segment spans residues 468–483 (ELTIWLTTFVSSLFLG). A topological domain (extracellular) is located at residue Leu484. A helical transmembrane segment spans residues 485–498 (DYGLITAVIIALMT). Residues 499–741 (VIYRTQSPSY…DSEPNATPEA (243 aa)) lie on the Cytoplasmic side of the membrane. Residues 505 to 718 (SPSYIVLGQL…AVLGSQVREA (214 aa)) form an extended region for STAS domain region. The STAS domain maps to 525–713 (AYEEVKEVPG…HSIHDAVLGS (189 aa)). The segment at 718–741 (ALAEQEATAAPPQEDSEPNATPEA) is disordered. A compositionally biased stretch (low complexity) spans 721–730 (EQEATAAPPQ).

This sequence belongs to the SLC26A/SulP transporter (TC 2.A.53) family. As to quaternary structure, homodimer. Interacts (via STAS domain) with CALM; this interaction is calcium-dependent and the STAS domain interacts with only one lobe of CALM which is an elongated conformation.

The protein resides in the cell membrane. The catalysed reaction is 2 hydrogencarbonate(in) + chloride(out) = 2 hydrogencarbonate(out) + chloride(in). Functionally, voltage-sensitive motor protein that drives outer hair cell (OHC) electromotility (eM) and participates in sound amplification in the hearing organ. Converts changes in the transmembrane electric potential into mechanical displacements resulting in the coupling of its expansion to movement of a charged voltage sensor across the lipid membrane. The nature of the voltage sensor is not completely clear, and two models compete. In the first model, acts as an incomplete transporter where intracellular chloride anion acts as extrinsic voltage sensor that drives conformational change in the protein which is sufficient to produce a length change in the plane of the membrane and hence in the length of the OHC. The second model in which multiple charged amino acid residues are distributed at the intracellular and extracellular membrane interfaces that form an intrinsic voltage sensor, whose movement produces the non-linear capacitance (NLC). However, the effective voltage sensor may be the result of a hybrid voltage sensor assembled from intrinsic charge (charged residues) and extrinsic charge (bound anion). Notably, binding of anions to the anion-binding pocket partially neutralizes the intrinsic positive charge rather than to form an electrically negative sensor, therefore remaining charge may serve as voltage sensor that, after depolarization, moves from down (expanded state) to up (contracted) conformation, which is accompanied by an eccentric contraction of the intermembrane cross-sectional area of the protein as well as a major increase in the hydrophobic thickness of the protein having as consequences the plasma membrane thickening and the cell contraction after membrane depolarization. The anion-binding pocket transits from the inward-open (Down) state, where it is exposed toward the intracellular solvent in the absence of anion, to the occluded (Up) state upon anion binding. Salicylate competes for the anion-binding site and inhibits the voltage-sensor movement, and therefore inhibits the charge transfer and electromotility by displacing Cl(-) from the anion-binding site and by preventing the structural transitions to the contracted state. In addition, can act as a weak Cl(-)/HCO3 (-) antiporter across the cell membrane and so regulate the intracellular pH of the outer hair cells (OHCs), while firstly found as being unable to mediate electrogenic anion transport. Moreover, supports a role in cardiac mechanical amplification serving as an elastic element to enhance the actomyosin- based sarcomere contraction system. The polypeptide is Prestin (Tursiops truncatus (Atlantic bottle-nosed dolphin)).